The chain runs to 375 residues: Protein arginine N-methyltransferase 6 (375 aa).

The segment at 1–36 (MSQPKRRKLESGGGGEGGEGTEEEDGGELEVAVPRP) is disordered. Positions 19 to 28 (EGTEEEDGGE) are enriched in acidic residues. T21 carries the phosphothreonine modification. Asymmetric dimethylarginine; by autocatalysis is present on R38. The region spanning 44–374 (DQLYYQCYSD…EEKTKDFAME (331 aa)) is the SAM-dependent MTase PRMT-type domain. Residues H57, R66, G90, E112, and E141 each contribute to the S-adenosyl-L-methionine site. Residues E155 and E164 contribute to the active site.

It belongs to the class I-like SAM-binding methyltransferase superfamily. Protein arginine N-methyltransferase family. PRMT6 subfamily. As to quaternary structure, interacts with (and methylates) HIV-1 Tat, Rev and Nucleocapsid protein p7 (NC). Interacts with EPB41L3 and NCOA1. Automethylation enhances its stability.

Its subcellular location is the nucleus. The catalysed reaction is L-arginyl-[protein] + 2 S-adenosyl-L-methionine = N(omega),N(omega)-dimethyl-L-arginyl-[protein] + 2 S-adenosyl-L-homocysteine + 2 H(+). Arginine methyltransferase that can catalyze the formation of both omega-N monomethylarginine (MMA) and asymmetrical dimethylarginine (aDMA), with a strong preference for the formation of aDMA. Preferentially methylates arginyl residues present in a glycine and arginine-rich domain and displays preference for monomethylated substrates. Specifically mediates the asymmetric dimethylation of histone H3 'Arg-2' to form H3R2me2a. H3R2me2a represents a specific tag for epigenetic transcriptional repression and is mutually exclusive with methylation on histone H3 'Lys-4' (H3K4me2 and H3K4me3). Acts as a transcriptional repressor of various genes such as HOXA2, THBS1 and TP53. Repression of TP53 blocks cellular senescence. Also methylates histone H2A and H4 'Arg-3' (H2AR3me and H4R3me, respectively). Acts as a regulator of DNA base excision during DNA repair by mediating the methylation of DNA polymerase beta (POLB), leading to the stimulation of its polymerase activity by enhancing DNA binding and processivity. Methylates HMGA1. Regulates alternative splicing events. Acts as a transcriptional coactivator of a number of steroid hormone receptors including ESR1, ESR2, PGR and NR3C1. Promotes fasting-induced transcriptional activation of the gluconeogenic program through methylation of the CRTC2 transcription coactivator. Methylates GPS2, protecting GPS2 from ubiquitination and degradation. Methylates SIRT7, inhibiting SIRT7 histone deacetylase activity and promoting mitochondria biogenesis. This chain is Protein arginine N-methyltransferase 6 (PRMT6), found in Bos taurus (Bovine).